The following is a 394-amino-acid chain: Candidapepsin (394 aa).

An N-terminal signal peptide occupies residues 1–23; it reads MATIFLFTKNVFIALAFALFAQG. Residues 24 to 60 constitute a propeptide, activation peptide; sequence LTIPDGIEKRTDKVVSLDFTVIRKPFNATAHRLIQKR. N-linked (GlcNAc...) asparagine glycosylation is present at N50. A Peptidase A1 domain is found at 74–381; the sequence is YAADIVVGSN…DLDDKTISLA (308 aa). D92 is a catalytic residue. C107 and C119 are joined by a disulfide. Residue D278 is part of the active site. A disulfide bond links C314 and C347.

This sequence belongs to the peptidase A1 family. Post-translationally, O-glycosylated.

Its subcellular location is the secreted. The enzyme catalyses Preferential cleavage at the carboxyl of hydrophobic amino acids, but fails to cleave 15-Leu-|-Tyr-16, 16-Tyr-|-Leu-17 and 24-Phe-|-Phe-25 of insulin B chain. Activates trypsinogen, and degrades keratin.. In Candida tropicalis (Yeast), this protein is Candidapepsin (SAPT1).